The primary structure comprises 392 residues: Chaperone protein DnaJ (392 aa).

The J domain occupies 2–67 (DYYTILGVAK…QKRESYDRYG (66 aa)). The segment at 149–227 (GVEKELLVSG…CRGQGRIKDK (79 aa)) adopts a CR-type zinc-finger fold. Positions 162, 165, 179, 182, 201, 204, 215, and 218 each coordinate Zn(2+). CXXCXGXG motif repeat units lie at residues 162 to 169 (CDACSGSG), 179 to 186 (CDRCKGSG), 201 to 208 (CPDCSGEG), and 215 to 222 (CSECRGQG).

The protein belongs to the DnaJ family. In terms of assembly, homodimer. Zn(2+) serves as cofactor.

It is found in the cytoplasm. Participates actively in the response to hyperosmotic and heat shock by preventing the aggregation of stress-denatured proteins and by disaggregating proteins, also in an autonomous, DnaK-independent fashion. Unfolded proteins bind initially to DnaJ; upon interaction with the DnaJ-bound protein, DnaK hydrolyzes its bound ATP, resulting in the formation of a stable complex. GrpE releases ADP from DnaK; ATP binding to DnaK triggers the release of the substrate protein, thus completing the reaction cycle. Several rounds of ATP-dependent interactions between DnaJ, DnaK and GrpE are required for fully efficient folding. Also involved, together with DnaK and GrpE, in the DNA replication of plasmids through activation of initiation proteins. The protein is Chaperone protein DnaJ of Chlamydia muridarum (strain MoPn / Nigg).